The primary structure comprises 97 residues: MESAWSSRGTSLGSSDPQLQRFMEAEVQKQRVQLLIHHMTELCWEKCMDKPGPRLDGRAELCLVNCVERFIDTSQFILNRLEQTQKARPLFSERLSD.

The Twin CX3C motif motif lies at 43–66 (CWEKCMDKPGPRLDGRAELCLVNC). 2 disulfide bridges follow: Cys-43-Cys-66 and Cys-47-Cys-62.

It belongs to the small Tim family. In terms of assembly, heterohexamer; possibly composed of 3 copies of TIMM8AB and 3 copies of TIMM13.

The protein resides in the mitochondrion inner membrane. Functionally, putative mitochondrial intermembrane chaperone that participates in the import and insertion of some multi-pass transmembrane proteins into the mitochondrial inner membrane. Also required for the transfer of beta-barrel precursors from the TOM complex to the sorting and assembly machinery (SAM complex) of the outer membrane. Acts as a chaperone-like protein that protects the hydrophobic precursors from aggregation and guide them through the mitochondrial intermembrane space. The protein is Putative mitochondrial import inner membrane translocase subunit Tim8 A-B (Timm8a2) of Mus musculus (Mouse).